The chain runs to 177 residues: Large ribosomal subunit protein uL6 (177 aa).

The protein belongs to the universal ribosomal protein uL6 family. As to quaternary structure, part of the 50S ribosomal subunit.

Its function is as follows. This protein binds to the 23S rRNA, and is important in its secondary structure. It is located near the subunit interface in the base of the L7/L12 stalk, and near the tRNA binding site of the peptidyltransferase center. This chain is Large ribosomal subunit protein uL6, found in Mannheimia succiniciproducens (strain KCTC 0769BP / MBEL55E).